Reading from the N-terminus, the 327-residue chain is Glycolipid sulfotransferase BCG_1434 (327 aa).

Residue 40–45 (KSGLTW) coordinates 3'-phosphoadenylyl sulfate. The active-site Proton acceptor is the His-97. 116-124 (RDPRDAAVS) serves as a coordination point for 3'-phosphoadenylyl sulfate.

The protein belongs to the sulfotransferase 1 family.

Its function is as follows. Involved in the synthesis of cell wall sulfolipids. This chain is Glycolipid sulfotransferase BCG_1434, found in Mycobacterium bovis (strain BCG / Pasteur 1173P2).